The chain runs to 141 residues: Lutropin subunit beta (141 aa).

The signal sequence occupies residues 1–20; the sequence is MEMFQGLLLWLLLGVAGVWA. Cystine bridges form between Cys-29–Cys-77, Cys-43–Cys-92, Cys-46–Cys-130, Cys-54–Cys-108, Cys-58–Cys-110, and Cys-113–Cys-120. N-linked (GlcNAc...) asparagine glycosylation occurs at Asn-33.

It belongs to the glycoprotein hormones subunit beta family. Heterodimer of a common alpha chain and a unique beta chain which confers biological specificity to thyrotropin, lutropin, follitropin and gonadotropin.

The protein localises to the secreted. Its function is as follows. Promotes spermatogenesis and ovulation by stimulating the testes and ovaries to synthesize steroids. In Bos taurus (Bovine), this protein is Lutropin subunit beta (LHB).